The following is a 330-amino-acid chain: Beta-ketoacyl-[acyl-carrier-protein] synthase III (330 aa).

Active-site residues include C114 and H255. The ACP-binding stretch occupies residues 256–260; the sequence is QANQR. Residue N285 is part of the active site.

This sequence belongs to the thiolase-like superfamily. FabH family. Homodimer.

It is found in the cytoplasm. It catalyses the reaction malonyl-[ACP] + acetyl-CoA + H(+) = 3-oxobutanoyl-[ACP] + CO2 + CoA. The protein operates within lipid metabolism; fatty acid biosynthesis. Its function is as follows. Catalyzes the condensation reaction of fatty acid synthesis by the addition to an acyl acceptor of two carbons from malonyl-ACP. Catalyzes the first condensation reaction which initiates fatty acid synthesis and may therefore play a role in governing the total rate of fatty acid production. Possesses both acetoacetyl-ACP synthase and acetyl transacylase activities. Its substrate specificity determines the biosynthesis of branched-chain and/or straight-chain of fatty acids. The chain is Beta-ketoacyl-[acyl-carrier-protein] synthase III from Nostoc sp. (strain PCC 7120 / SAG 25.82 / UTEX 2576).